The primary structure comprises 426 residues: Dihydropyrimidine dehydrogenase (NADP(+)), chloroplastic (426 aa).

Residues 1–44 (MASMSFALNRFSGLSSKTTLSADFDPSSRRSFLPPTRVGLKISS) constitute a chloroplast transit peptide. Position 45 is an N-acetylalanine (A45). Residues N129 and 188–190 (NFS) contribute to the substrate site. C191 functions as the Nucleophile in the catalytic mechanism. A substrate-binding site is contributed by 256–257 (NT). The tract at residues 395 to 414 (VEQRKAEKRGLKSDKDWTGD) is disordered.

The protein belongs to the dihydropyrimidine dehydrogenase family. As to expression, expressed in roots, leaves, stems, siliques and flowers. Highly expressed ion dry seeds.

It localises to the plastid. It is found in the chloroplast. It carries out the reaction 5,6-dihydrouracil + NADP(+) = uracil + NADPH + H(+). The protein operates within amino-acid biosynthesis; beta-alanine biosynthesis. In terms of biological role, involved in pyrimidine base degradation. Catalyzes the reduction of uracil to 5,6-dihydrouracil (DHU) by using NADH as a specific cosubstrate and the reduction of thymine to 5,6-dihydrothymine (DHT). Involved in the recycling of nitrogen from nucleobases to general nitrogen metabolism. This Arabidopsis thaliana (Mouse-ear cress) protein is Dihydropyrimidine dehydrogenase (NADP(+)), chloroplastic.